Here is a 284-residue protein sequence, read N- to C-terminus: Avenin-like b11 (284 aa).

The signal sequence occupies residues 1-18 (MKVFILALLALTATTAIA).

This sequence belongs to the prolamin family. Contains disulfide bonds.

In terms of biological role, seed storage protein. Might be integrated via inter-chain disulfide bonds within the glutenin polymer. This Triticum aestivum (Wheat) protein is Avenin-like b11.